The primary structure comprises 196 residues: Cysteine/O-acetylserine efflux protein (196 aa).

Residues 1–21 traverse the membrane as a helical segment; it reads MTPTLISAFLTYTLITALTPG. The Cytoplasmic portion of the chain corresponds to 22–41; sequence PNNILALSSVTSHGLRRSLR. A helical transmembrane segment spans residues 42 to 62; sequence VLAGMSVGFIITMLICAALTF. Residues 63–70 lie on the Periplasmic side of the membrane; that stretch reads SLVELDSR. The chain crosses the membrane as a helical span at residues 71-91; it reads FTLVLGWIGAAYILWLAWQIA. The Cytoplasmic segment spans residues 92–114; sequence KSKPATGTPSVEPVGFWASLGLQ. The helical transmembrane segment at 115–135 threads the bilayer; the sequence is FVNVKIILYGITALSTFVLPV. Residues 136–139 are Periplasmic-facing; that stretch reads TREP. A helical membrane pass occupies residues 140-160; sequence VWLISVSLLLAAIGALGNLCW. Residues 161 to 170 lie on the Cytoplasmic side of the membrane; sequence ALAGHLFQRL. Residues 171 to 191 traverse the membrane as a helical segment; the sequence is FLLYGRQLNWMLAALLVYCAV. Residues 192 to 196 lie on the Periplasmic side of the membrane; sequence RIVVE.

Belongs to the Rht family.

Its subcellular location is the cell inner membrane. The enzyme catalyses O-acetyl-L-serine(in) = O-acetyl-L-serine(out). It carries out the reaction L-cysteine(in) = L-cysteine(out). Its function is as follows. Exporter of O-acetylserine (OAS) and cysteine. The chain is Cysteine/O-acetylserine efflux protein (eamB) from Klebsiella pneumoniae subsp. pneumoniae (strain ATCC 700721 / MGH 78578).